The sequence spans 203 residues: MSDDSSSPLTTLKILIIGESGVGKSSLMLRFVDDVFDPEQAATIGVDFRVTSMAIDGNRVKLAIWDTAGQERFRTLTPSYYRGAQGVICVYDVTSRSSFEKLNHWMQEVDTYCTNDNIIKMMVANKIDMPNRVVTREEGLKFAKRHRTLFIEASAKTKEGVQCTFEELIEKIIQTPDLWDNDRPSFRLGQPTGSSGGGGMCGC.

Residues Ser-20, Gly-23, Lys-24, Ser-25, Ser-26, Asp-37, Pro-38, Thr-43, Gly-69, Lys-126, Asp-128, and Ala-155 each coordinate GTP. Residues 40–48 carry the Effector region motif; sequence QAATIGVDF. Residues Cys-201 and Cys-203 are each lipidated (S-geranylgeranyl cysteine). Cys-203 is subject to Cysteine methyl ester.

It belongs to the small GTPase superfamily. Rab family.

The enzyme catalyses GTP + H2O = GDP + phosphate + H(+). The small GTPases Rab are key regulators of intracellular membrane trafficking, from the formation of transport vesicles to their fusion with membranes. Rabs cycle between an inactive GDP-bound form and an active GTP-bound form that is able to recruit to membranes different sets of downstream effectors directly responsible for vesicle formation, movement, tethering and fusion. Plays a role in apical endocytosis/recycling. May be implicated in transport between the plasma membrane and early endosomes. Plays a role in the shedding of pathogen spores from intestinal cells. This Caenorhabditis elegans protein is Ras-related protein Rab-18 (rab-18).